The chain runs to 563 residues: Arginine--tRNA ligase (563 aa).

Residues 121 to 131 (PNIAKPFSIGH) carry the 'HIGH' region motif.

Belongs to the class-I aminoacyl-tRNA synthetase family. Monomer.

It is found in the cytoplasm. It catalyses the reaction tRNA(Arg) + L-arginine + ATP = L-arginyl-tRNA(Arg) + AMP + diphosphate. The sequence is that of Arginine--tRNA ligase from Streptococcus pneumoniae (strain P1031).